Reading from the N-terminus, the 234-residue chain is Endonuclease V (234 aa).

D46 and D116 together coordinate Mg(2+).

This sequence belongs to the endonuclease V family. Mg(2+) serves as cofactor.

The protein localises to the cytoplasm. The enzyme catalyses Endonucleolytic cleavage at apurinic or apyrimidinic sites to products with a 5'-phosphate.. Its function is as follows. DNA repair enzyme involved in the repair of deaminated bases. Selectively cleaves double-stranded DNA at the second phosphodiester bond 3' to a deoxyinosine leaving behind the intact lesion on the nicked DNA. The protein is Endonuclease V of Clostridium acetobutylicum (strain ATCC 824 / DSM 792 / JCM 1419 / IAM 19013 / LMG 5710 / NBRC 13948 / NRRL B-527 / VKM B-1787 / 2291 / W).